Reading from the N-terminus, the 63-residue chain is Sec-independent protein translocase protein TatA (63 aa).

Residues 1–21 (MGSFSMWHWLIVLVIVLLLFG) form a helical membrane-spanning segment. The disordered stretch occupies residues 42-63 (GMTDEDAPDTAKTVDHKADETK). Positions 53-63 (KTVDHKADETK) are enriched in basic and acidic residues.

Belongs to the TatA/E family. As to quaternary structure, the Tat system comprises two distinct complexes: a TatABC complex, containing multiple copies of TatA, TatB and TatC subunits, and a separate TatA complex, containing only TatA subunits. Substrates initially bind to the TatABC complex, which probably triggers association of the separate TatA complex to form the active translocon.

Its subcellular location is the cell inner membrane. In terms of biological role, part of the twin-arginine translocation (Tat) system that transports large folded proteins containing a characteristic twin-arginine motif in their signal peptide across membranes. TatA could form the protein-conducting channel of the Tat system. In Rhizobium leguminosarum bv. trifolii (strain WSM2304), this protein is Sec-independent protein translocase protein TatA.